The primary structure comprises 172 residues: Large ribosomal subunit protein uL10 (172 aa).

This sequence belongs to the universal ribosomal protein uL10 family. As to quaternary structure, part of the ribosomal stalk of the 50S ribosomal subunit. The N-terminus interacts with L11 and the large rRNA to form the base of the stalk. The C-terminus forms an elongated spine to which L12 dimers bind in a sequential fashion forming a multimeric L10(L12)X complex.

In terms of biological role, forms part of the ribosomal stalk, playing a central role in the interaction of the ribosome with GTP-bound translation factors. In Dinoroseobacter shibae (strain DSM 16493 / NCIMB 14021 / DFL 12), this protein is Large ribosomal subunit protein uL10.